Consider the following 298-residue polypeptide: Probable endonuclease 4 (298 aa).

His70, His111, Glu146, Asp180, His183, His215, Asp228, His230, and Glu260 together coordinate Zn(2+).

Belongs to the AP endonuclease 2 family. Requires Zn(2+) as cofactor.

The catalysed reaction is Endonucleolytic cleavage to 5'-phosphooligonucleotide end-products.. Functionally, endonuclease IV plays a role in DNA repair. It cleaves phosphodiester bonds at apurinic or apyrimidinic (AP) sites, generating a 3'-hydroxyl group and a 5'-terminal sugar phosphate. The chain is Probable endonuclease 4 from Halalkalibacterium halodurans (strain ATCC BAA-125 / DSM 18197 / FERM 7344 / JCM 9153 / C-125) (Bacillus halodurans).